We begin with the raw amino-acid sequence, 348 residues long: Dihydroorotase (348 aa).

The Zn(2+) site is built by His17 and His19. Substrate contacts are provided by residues 19–21 (HLR) and Asn45. The Zn(2+) site is built by Lys103, His140, and His178. An N6-carboxylysine modification is found at Lys103. His140 contacts substrate. Position 223 (Leu223) interacts with substrate. Position 251 (Asp251) interacts with Zn(2+). Residue Asp251 is part of the active site. Residues His255 and Ala267 each coordinate substrate.

The protein belongs to the metallo-dependent hydrolases superfamily. DHOase family. Class II DHOase subfamily. In terms of assembly, homodimer. It depends on Zn(2+) as a cofactor.

It catalyses the reaction (S)-dihydroorotate + H2O = N-carbamoyl-L-aspartate + H(+). It functions in the pathway pyrimidine metabolism; UMP biosynthesis via de novo pathway; (S)-dihydroorotate from bicarbonate: step 3/3. Its function is as follows. Catalyzes the reversible cyclization of carbamoyl aspartate to dihydroorotate. This chain is Dihydroorotase, found in Salmonella newport (strain SL254).